The primary structure comprises 379 residues: L-lactate dehydrogenase (379 aa).

The region spanning 1–379 (MIISSSTDYR…ISPDSLVRGL (379 aa)) is the FMN hydroxy acid dehydrogenase domain. Substrate is bound at residue Y24. 2 residues coordinate FMN: S106 and Q127. Y129 is a binding site for substrate. T155 provides a ligand contact to FMN. R164 contributes to the substrate binding site. K251 is an FMN binding site. Residue H275 is the Proton acceptor of the active site. R278 serves as a coordination point for substrate. 306-330 (DSGIRSGLDVVRMIAQGADGVLIGR) lines the FMN pocket.

The protein belongs to the FMN-dependent alpha-hydroxy acid dehydrogenase family. FMN serves as cofactor.

It is found in the cell inner membrane. The enzyme catalyses (S)-lactate + A = pyruvate + AH2. Its function is as follows. Catalyzes the conversion of L-lactate to pyruvate. Is coupled to the respiratory chain. The polypeptide is L-lactate dehydrogenase (Allorhizobium ampelinum (strain ATCC BAA-846 / DSM 112012 / S4) (Agrobacterium vitis (strain S4))).